We begin with the raw amino-acid sequence, 420 residues long: Tryptophan synthase beta chain (420 aa).

N6-(pyridoxal phosphate)lysine is present on Lys100.

This sequence belongs to the TrpB family. As to quaternary structure, tetramer of two alpha and two beta chains. Pyridoxal 5'-phosphate serves as cofactor.

The enzyme catalyses (1S,2R)-1-C-(indol-3-yl)glycerol 3-phosphate + L-serine = D-glyceraldehyde 3-phosphate + L-tryptophan + H2O. The protein operates within amino-acid biosynthesis; L-tryptophan biosynthesis; L-tryptophan from chorismate: step 5/5. Functionally, the beta subunit is responsible for the synthesis of L-tryptophan from indole and L-serine. The sequence is that of Tryptophan synthase beta chain from Pyrobaculum islandicum (strain DSM 4184 / JCM 9189 / GEO3).